Here is a 449-residue protein sequence, read N- to C-terminus: Trigger factor (449 aa).

A PPIase FKBP-type domain is found at 174–261 (GDIAVVGFKG…LKDLKTRELP (88 aa)). The tract at residues 430–449 (ENSTVTEKAPDKDKPSVTDA) is disordered. Over residues 437–449 (KAPDKDKPSVTDA) the composition is skewed to basic and acidic residues.

Belongs to the FKBP-type PPIase family. Tig subfamily.

It is found in the cytoplasm. It catalyses the reaction [protein]-peptidylproline (omega=180) = [protein]-peptidylproline (omega=0). Involved in protein export. Acts as a chaperone by maintaining the newly synthesized protein in an open conformation. Functions as a peptidyl-prolyl cis-trans isomerase. The protein is Trigger factor of Synechococcus sp. (strain CC9311).